Reading from the N-terminus, the 103-residue chain is Protein S100-A16 (103 aa).

In terms of domain architecture, EF-hand 1; degenerate spans 12–47 (VVVLVENFYKYVSKHSLVKNKISKSSFRKMLQKELN). One can recognise an EF-hand 2 domain in the interval 54–89 (GNRKAADKLIQNLDANHDGRISFDEYWTLIGGITSP). Ca(2+) is bound by residues Asp67, Asn69, Asp71, Arg73, and Glu78.

It belongs to the S-100 family. In terms of assembly, homodimer. Interacts with TP53.

It is found in the nucleus. It localises to the nucleolus. The protein resides in the cytoplasm. Its function is as follows. Calcium-binding protein. Binds one calcium ion per monomer. Can promote differentiation of adipocytes (in vitro). Overexpression in preadipocytes increases their proliferation, enhances adipogenesis and reduces insulin-stimulated glucose uptake. This is Protein S100-A16 (S100A16) from Bos taurus (Bovine).